Here is a 125-residue protein sequence, read N- to C-terminus: Histone H2B type 1 (125 aa).

The interval 1–36 is disordered; sequence MPEPAKSRPAPKKGSKKAVTKAQKKDGKERKRSRKE. Pro-2 carries the N-acetylproline modification. The residue at position 3 (Glu-3) is an ADP-ribosyl glutamic acid. N6-(2-hydroxyisobutyryl)lysine; alternate is present on Lys-6. Lys-6 carries the post-translational modification N6-(beta-hydroxybutyryl)lysine; alternate. The residue at position 6 (Lys-6) is an N6-acetyllysine; alternate. Lys-6 carries the N6-butyryllysine; alternate modification. Lys-6 carries the N6-crotonyllysine; alternate modification. Residue Lys-6 is modified to N6-lactoyllysine; alternate. Lys-6 is covalently cross-linked (Glycyl lysine isopeptide (Lys-Gly) (interchain with G-Cter in SUMO2); alternate). Residue Ser-7 is modified to ADP-ribosylserine. Positions 9-19 are enriched in basic residues; the sequence is PAPKKGSKKAV. Lys-12 is modified (N6-(beta-hydroxybutyryl)lysine; alternate). An N6-acetyllysine; alternate mark is found at Lys-12 and Lys-13. Residues Lys-12 and Lys-13 each carry the N6-crotonyllysine; alternate modification. Residue Lys-12 is modified to N6-lactoyllysine; alternate. Lys-13 carries the post-translational modification N6-(2-hydroxyisobutyryl)lysine; alternate. Residue Ser-15 is modified to Phosphoserine; by STK4/MST1. N6-acetyllysine; alternate occurs at positions 16, 17, 21, and 24. Lys-16, Lys-17, Lys-21, and Lys-24 each carry N6-crotonyllysine; alternate. Residues Lys-16, Lys-17, Lys-21, and Lys-24 each carry the N6-lactoyllysine; alternate modification. At Lys-17 the chain carries N6-glutaryllysine; alternate. Lys-21 and Lys-24 each carry N6-(2-hydroxyisobutyryl)lysine; alternate. Lys-21 is modified (N6-(beta-hydroxybutyryl)lysine; alternate). Position 21 is an N6-butyryllysine; alternate (Lys-21). Lys-21 is covalently cross-linked (Glycyl lysine isopeptide (Lys-Gly) (interchain with G-Cter in SUMO2); alternate). At Lys-25 the chain carries N6-(2-hydroxyisobutyryl)lysine. Lys-35 is subject to N6-(2-hydroxyisobutyryl)lysine; alternate. N6-(beta-hydroxybutyryl)lysine; alternate is present on Lys-35. Residue Lys-35 is modified to N6-crotonyllysine; alternate. Position 35 is an N6-glutaryllysine; alternate (Lys-35). Lys-35 is subject to N6-succinyllysine; alternate. Residue Lys-35 forms a Glycyl lysine isopeptide (Lys-Gly) (interchain with G-Cter in ubiquitin); alternate linkage. Glu-36 carries the post-translational modification PolyADP-ribosyl glutamic acid. Ser-37 is subject to Phosphoserine; by AMPK. 3 positions are modified to N6-(2-hydroxyisobutyryl)lysine; alternate: Lys-44, Lys-47, and Lys-58. Lys-44 is modified (N6-lactoyllysine; alternate). Residues Lys-44 and Lys-47 each carry the N6-glutaryllysine; alternate modification. N6-methyllysine; alternate is present on Lys-47. The residue at position 58 (Lys-58) is an N6,N6-dimethyllysine; alternate. Residue Arg-79 is modified to Dimethylated arginine. At Lys-85 the chain carries N6-(2-hydroxyisobutyryl)lysine; alternate. Residue Lys-85 is modified to N6-acetyllysine; alternate. Residue Lys-85 is modified to N6-lactoyllysine; alternate. An N6,N6,N6-trimethyllysine; alternate modification is found at Lys-85. Omega-N-methylarginine occurs at positions 86 and 92. Lys-108 bears the N6-(2-hydroxyisobutyryl)lysine; alternate mark. Lys-108 carries the N6-lactoyllysine; alternate modification. N6-glutaryllysine; alternate is present on Lys-108. N6-methyllysine; alternate is present on Lys-108. Ser-112 carries O-linked (GlcNAc) serine glycosylation. At Thr-115 the chain carries Phosphothreonine. Lys-116 and Lys-120 each carry N6-(2-hydroxyisobutyryl)lysine; alternate. Lys-116 carries the N6-(beta-hydroxybutyryl)lysine; alternate modification. 2 positions are modified to N6-lactoyllysine; alternate: Lys-116 and Lys-120. N6-glutaryllysine; alternate is present on residues Lys-116 and Lys-120. Lys-116 and Lys-120 each carry N6-succinyllysine; alternate. Lys-116 is modified (N6-methylated lysine; alternate). Lys-120 is covalently cross-linked (Glycyl lysine isopeptide (Lys-Gly) (interchain with G-Cter in ubiquitin); alternate).

It belongs to the histone H2B family. The nucleosome is a histone octamer containing two molecules each of H2A, H2B, H3 and H4 assembled in one H3-H4 heterotetramer and two H2A-H2B heterodimers. The octamer wraps approximately 147 bp of DNA. Post-translationally, monoubiquitination at Lys-35 (H2BK34Ub) by the MSL1/MSL2 dimer is required for histone H3 'Lys-4' (H3K4me) and 'Lys-79' (H3K79me) methylation and transcription activation at specific gene loci, such as HOXA9 and MEIS1 loci. Similarly, monoubiquitination at Lys-120 (H2BK120Ub) by the RNF20/40 complex gives a specific tag for epigenetic transcriptional activation and is also prerequisite for histone H3 'Lys-4' and 'Lys-79' methylation. It also functions cooperatively with the FACT dimer to stimulate elongation by RNA polymerase II. H2BK120Ub also acts as a regulator of mRNA splicing: deubiquitination by USP49 is required for efficient cotranscriptional splicing of a large set of exons. Phosphorylated on Ser-15 (H2BS14ph) by STK4/MST1 during apoptosis; which facilitates apoptotic chromatin condensation. Also phosphorylated on Ser-15 in response to DNA double strand breaks (DSBs), and in correlation with somatic hypermutation and immunoglobulin class-switch recombination. Phosphorylation at Ser-37 (H2BS36ph) by AMPK in response to stress promotes transcription. In terms of processing, ADP-ribosylated by PARP1 or PARP2 on Ser-7 (H2BS6ADPr) in response to DNA damage. H2BS6ADPr promotes recruitment of CHD1L. Mono-ADP-ribosylated on Glu-3 (H2BE2ADPr) by PARP3 in response to single-strand breaks. Poly ADP-ribosylation on Glu-36 (H2BE35ADPr) by PARP1 regulates adipogenesis: it inhibits phosphorylation at Ser-37 (H2BS36ph), thereby blocking expression of pro-adipogenetic genes. Post-translationally, crotonylation (Kcr) is specifically present in male germ cells and marks testis-specific genes in post-meiotic cells, including X-linked genes that escape sex chromosome inactivation in haploid cells. Crotonylation marks active promoters and enhancers and confers resistance to transcriptional repressors. It is also associated with post-meiotically activated genes on autosomes. GlcNAcylation at Ser-112 promotes monoubiquitination of Lys-120. It fluctuates in response to extracellular glucose, and associates with transcribed genes. In terms of processing, lactylated in macrophages by EP300/P300 by using lactoyl-CoA directly derived from endogenous or exogenous lactate, leading to stimulates gene transcription.

The protein resides in the nucleus. Its subcellular location is the chromosome. In terms of biological role, core component of nucleosome. Nucleosomes wrap and compact DNA into chromatin, limiting DNA accessibility to the cellular machineries which require DNA as a template. Histones thereby play a central role in transcription regulation, DNA repair, DNA replication and chromosomal stability. DNA accessibility is regulated via a complex set of post-translational modifications of histones, also called histone code, and nucleosome remodeling. Has broad antibacterial activity. May contribute to the formation of the functional antimicrobial barrier of the colonic epithelium, and to the bactericidal activity of amniotic fluid. The protein is Histone H2B type 1 of Rattus norvegicus (Rat).